Consider the following 114-residue polypeptide: SNF1-related protein kinase regulatory subunit beta-3 (114 aa).

The interval 26 to 50 (SYNNVYSSTEDETRDPPAVPPHLQH) is disordered. The interval 40-114 (DPPAVPPHLQ…PVQRRGSANV (75 aa)) is association with SNF1 complex (ASC).

It belongs to the 5'-AMP-activated protein kinase beta subunit family. Subunit of a probable heterotrimeric complex consisting of an alpha catalytic (KIN10 or KIN11) subunit, and a beta (KINB) and a gamma (KING or SNF4) non-catalytic regulatory subunits. Interacts with KIN10, KIN11 and SNF4. Interacts with FLZ1, FLZ2, FLZ3, FLZ4, FLZ5, FLZ7, FLZ8, FLZ10, FLZ13, FLZ14, FLZ15 and FLZ16. In terms of tissue distribution, expressed in rosette (at the protein level). Expressed in the whole plant and at the different developmental stage with a higher level in stems.

Functionally, regulatory subunit of the probable trimeric SNF1-related protein kinase (SnRK) complex, which may play a role in a signal transduction cascade regulating gene expression and carbohydrate metabolism in higher plants. This chain is SNF1-related protein kinase regulatory subunit beta-3 (KINB3), found in Arabidopsis thaliana (Mouse-ear cress).